The chain runs to 167 residues: Large ribosomal subunit protein uL10 (167 aa).

It belongs to the universal ribosomal protein uL10 family. In terms of assembly, part of the ribosomal stalk of the 50S ribosomal subunit. The N-terminus interacts with L11 and the large rRNA to form the base of the stalk. The C-terminus forms an elongated spine to which L12 dimers bind in a sequential fashion forming a multimeric L10(L12)X complex.

Its function is as follows. Forms part of the ribosomal stalk, playing a central role in the interaction of the ribosome with GTP-bound translation factors. This is Large ribosomal subunit protein uL10 from Erwinia tasmaniensis (strain DSM 17950 / CFBP 7177 / CIP 109463 / NCPPB 4357 / Et1/99).